The primary structure comprises 240 residues: ATP-dependent dethiobiotin synthetase BioD (240 aa).

ATP is bound at residue 12–17; that stretch reads EIGKTV. Residue T16 coordinates Mg(2+). K37 is a catalytic residue. A substrate-binding site is contributed by S41. ATP contacts are provided by residues D54, 115-118, 179-180, and 207-209; these read EGSG, NQ, and PYI. Mg(2+) is bound by residues D54 and E115.

It belongs to the dethiobiotin synthetase family. Homodimer. It depends on Mg(2+) as a cofactor.

It localises to the cytoplasm. It catalyses the reaction (7R,8S)-7,8-diammoniononanoate + CO2 + ATP = (4R,5S)-dethiobiotin + ADP + phosphate + 3 H(+). It participates in cofactor biosynthesis; biotin biosynthesis; biotin from 7,8-diaminononanoate: step 1/2. Functionally, catalyzes a mechanistically unusual reaction, the ATP-dependent insertion of CO2 between the N7 and N8 nitrogen atoms of 7,8-diaminopelargonic acid (DAPA, also called 7,8-diammoniononanoate) to form a ureido ring. In Clostridium acetobutylicum (strain ATCC 824 / DSM 792 / JCM 1419 / IAM 19013 / LMG 5710 / NBRC 13948 / NRRL B-527 / VKM B-1787 / 2291 / W), this protein is ATP-dependent dethiobiotin synthetase BioD.